The following is a 498-amino-acid chain: Neuronal acetylcholine receptor subunit beta-4 (498 aa).

An N-terminal signal peptide occupies residues 1-21 (MRRAPSLVLFFLVALCGRGNC). Residues 22–239 (RVANAEEKLM…RKPLFYTINL (218 aa)) lie on the Extracellular side of the membrane. N-linked (GlcNAc...) asparagine glycosylation is found at Asn-36, Asn-93, Asn-138, and Asn-166. A disulfide bridge links Cys-153 with Cys-167. A helical transmembrane segment spans residues 240–255 (IIPCVLTTLLAILVFY). At 256–261 (LPSDCG) the chain is on the cytoplasmic side. Glu-262 serves as a coordination point for Na(+). Residues 262–277 (EKMTLCISVLLALTFF) form a helical membrane-spanning segment. The Extracellular segment spans residues 278–296 (LLLISKIVPPTSLDVPLIG). Residues 297 to 321 (KYLMFTMVLVTFSIVTSVCVLNVHH) form a helical membrane-spanning segment. Topologically, residues 322 to 454 (RSPSTHTMAP…QSVVEDWKYV (133 aa)) are cytoplasmic. The segment at 357 to 377 (ARAFPPSKSCVTKPEATATST) is disordered. The chain crosses the membrane as a helical span at residues 455–478 (AMVVDRLFLWVFMFVCVLGTVGLF). Topologically, residues 479–498 (LPPLFQTHAASEGPYAAQRD) are extracellular.

The protein belongs to the ligand-gated ion channel (TC 1.A.9) family. Acetylcholine receptor (TC 1.A.9.1) subfamily. Beta-4/CHRNB4 sub-subfamily. As to quaternary structure, neuronal AChR is composed of two different types of subunits: alpha and beta. CHRNB4/Beta-4 subunit can be combined to CHRNA2/alpha-2, CHRNA3/alpha-3 or CHRNA4/alpha-4, CHRNA5/alpha-5 and CHRNB3/beta-3 to give rise to functional receptors. Forms stoichiometries such as (CHRNA3)2:(CHRNB4)3 or (CHRNA3:CHRNB4)2:CHRNB3. Interacts with RIC3; which is required for proper folding and assembly. Interacts with LYPD6.

The protein localises to the synaptic cell membrane. The protein resides in the cell membrane. It carries out the reaction Ca(2+)(in) = Ca(2+)(out). It catalyses the reaction K(+)(in) = K(+)(out). The enzyme catalyses Na(+)(in) = Na(+)(out). Its activity is regulated as follows. Activated by a myriad of ligands such as acetylcholine, cytisine, nicotine, choline and epibatidine. The heteropentamer CHRNA3:CHRNB4 activity is blocked by the alpha-conotoxin ImI and AuIB. Its function is as follows. Component of neuronal acetylcholine receptors (nAChRs) that function as pentameric, ligand-gated cation channels with high calcium permeability among other activities. nAChRs are excitatory neurotrasnmitter receptors formed by a collection of nAChR subunits known to mediate synaptic transmission in the nervous system and the neuromuscular junction. Each nAchR subunit confers differential attributes to channel properties, including activation, deactivation and desensitization kinetics, pH sensitivity, cation permeability, and binding to allosteric modulators. CHRNB4 forms heteropentameric neuronal acetylcholine receptors with CHRNA2, CHRNA3 and CHRNA4, as well as CHRNA5 and CHRNB3 as accesory subunits. CHRNA3:CHRNB4 being predominant in neurons of the autonomic ganglia, it is known as ganglionic nicotinic receptor. CHRNA3:CHRNB4 or CHRNA3:CHRNA5:CHRNB4 play also an important role in the habenulo-interpeduncular tract, modulating the mesolimbic dopamine system and affecting reward circuits and addiction. Hypothalamic CHRNA3:CHRNB4 nAChR activation by nicotine leads to activation of POMC neurons and a decrease in food intake. The chain is Neuronal acetylcholine receptor subunit beta-4 from Homo sapiens (Human).